Consider the following 358-residue polypeptide: tRNA (guanine-N(7)-)-methyltransferase (358 aa).

The disordered stretch occupies residues 1 to 29 (MTPPPPKRQKRDEYRKATAEATSQSGASD). Residues Gly99 and 122–123 (EI) each bind S-adenosyl-L-methionine. Residues 151–186 (TATAASETPSQQQAQIDGKQANANAAADAASPAPST) show a composition bias toward low complexity. A disordered region spans residues 151–194 (TATAASETPSQQQAQIDGKQANANAAADAASPAPSTDTEHMPTT). Residues 209–210 (NT) and Cys229 each bind S-adenosyl-L-methionine. Asp232 is a catalytic residue. 330 to 332 (TEE) serves as a coordination point for S-adenosyl-L-methionine.

The protein belongs to the class I-like SAM-binding methyltransferase superfamily. TrmB family. Forms a complex with trm82.

The protein localises to the nucleus. The catalysed reaction is guanosine(46) in tRNA + S-adenosyl-L-methionine = N(7)-methylguanosine(46) in tRNA + S-adenosyl-L-homocysteine. Its pathway is tRNA modification; N(7)-methylguanine-tRNA biosynthesis. In terms of biological role, catalyzes the formation of N(7)-methylguanine at position 46 (m7G46) in tRNA. This Aspergillus fumigatus (strain ATCC MYA-4609 / CBS 101355 / FGSC A1100 / Af293) (Neosartorya fumigata) protein is tRNA (guanine-N(7)-)-methyltransferase (trm8).